A 21-amino-acid chain; its full sequence is uncharacterized protein (21 aa).

This is an uncharacterized protein from Escherichia coli (strain K12).